A 389-amino-acid polypeptide reads, in one-letter code: Glutamate 5-kinase (389 aa).

Residue Lys16 coordinates ATP. Substrate-binding residues include Ser56, Asp143, and Asn155. 175–176 (SD) is a binding site for ATP. Positions 281–358 (AGGLHVDDGA…AEIEAILGYP (78 aa)) constitute a PUA domain.

It belongs to the glutamate 5-kinase family.

The protein resides in the cytoplasm. It carries out the reaction L-glutamate + ATP = L-glutamyl 5-phosphate + ADP. Its pathway is amino-acid biosynthesis; L-proline biosynthesis; L-glutamate 5-semialdehyde from L-glutamate: step 1/2. Its function is as follows. Catalyzes the transfer of a phosphate group to glutamate to form L-glutamate 5-phosphate. The protein is Glutamate 5-kinase of Rhizobium leguminosarum bv. trifolii (strain WSM2304).